The sequence spans 151 residues: Austinoid biosynthesis clusters protein F (151 aa).

The protein belongs to the trt14 isomerase family. In terms of assembly, homodimer.

The protein operates within secondary metabolite biosynthesis; terpenoid biosynthesis. Part of the gene cluster B that mediates the biosynthesis of the fungal meroterpenoid acetoxydehydroaustin. The first step of the pathway is the synthesis of 3,5-dimethylorsellinic acid by the polyketide synthase ausA. 3,5-dimethylorsellinic acid is then prenylated by the polyprenyl transferase ausN. Further epoxidation by the FAD-dependent monooxygenase ausM and cyclization by the probable terpene cyclase ausL lead to the formation of protoaustinoid A. Protoaustinoid A is then oxidized to spiro-lactone preaustinoid A3 by the combined action of the FAD-binding monooxygenases ausB and ausC, and the dioxygenase ausE. Acid-catalyzed keto-rearrangement and ring contraction of the tetraketide portion of preaustinoid A3 by ausJ lead to the formation of preaustinoid A4. The aldo-keto reductase ausK, with the help of ausH, is involved in the next step by transforming preaustinoid A4 into isoaustinone which is in turn hydroxylated by the P450 monooxygenase ausI to form austinolide. The cytochrome P450 monooxygenase ausG then modifies austinolide to austinol. Austinol is further acetylated to austin by the O-acetyltransferase ausP, which spontaneously changes to dehydroaustin. The cytochrome P450 monooxygenase then converts dehydroaustin is into 7-dehydrodehydroaustin. The hydroxylation catalyzed by ausR permits the second O-acetyltransferase ausQ to add an additional acetyl group to the molecule, leading to the formation of acetoxydehydroaustin. Due to genetic rearrangements of the clusters and the subsequent loss of some enzymes, the end product of the Penicillium brasilianum austinoid biosynthesis clusters is acetoxydehydroaustin. This is Austinoid biosynthesis clusters protein F from Penicillium brasilianum.